Reading from the N-terminus, the 234-residue chain is Probable transcriptional regulatory protein Pfl01_3677 (234 aa).

This sequence belongs to the TACO1 family.

The protein resides in the cytoplasm. This chain is Probable transcriptional regulatory protein Pfl01_3677, found in Pseudomonas fluorescens (strain Pf0-1).